Consider the following 259-residue polypeptide: Leucine-rich repeat-containing protein 61 (259 aa).

4 LRR repeats span residues 32 to 53 (SILL…GECL), 54 to 75 (GLEW…ASLR), 76 to 97 (QLAV…ATCE), and 98 to 119 (NLQS…QCLA). Positions 138-178 (NPLCANPSYWAAVRELLPGLKVIDGERVIGRGSEFYQLCRD) constitute an LRRCT domain.

The sequence is that of Leucine-rich repeat-containing protein 61 (LRRC61) from Homo sapiens (Human).